The following is a 158-amino-acid chain: Disease resistance response protein DRRG49-C (158 aa).

Belongs to the BetVI family.

The polypeptide is Disease resistance response protein DRRG49-C (Pisum sativum (Garden pea)).